The chain runs to 628 residues: Chaperone protein DnaK (628 aa).

The residue at position 197 (threonine 197) is a Phosphothreonine; by autocatalysis. The disordered stretch occupies residues 597–628; it reads EQMYKGEQGAQGGAADTSKKKSDDDVIDAEIE.

Belongs to the heat shock protein 70 family.

Functionally, acts as a chaperone. The polypeptide is Chaperone protein DnaK (Sulfurimonas denitrificans (strain ATCC 33889 / DSM 1251) (Thiomicrospira denitrificans (strain ATCC 33889 / DSM 1251))).